The sequence spans 380 residues: Large ribosomal subunit protein mL38 (380 aa).

Residues 1–26 constitute a mitochondrion transit peptide; sequence MAAPWWRAALCECRRWRGFSTSAVLG. A coiled-coil region spans residues 99-127; that stretch reads RTQQLLERKQAIQELRANVEEERAARLRT.

Belongs to the phosphatidylethanolamine-binding protein family. Mitochondrion-specific ribosomal protein mL38 subfamily. As to quaternary structure, component of the mitochondrial large ribosomal subunit (mt-LSU). Mature mammalian 55S mitochondrial ribosomes consist of a small (28S) and a large (39S) subunit. The 28S small subunit contains a 12S ribosomal RNA (12S mt-rRNA) and 30 different proteins. The 39S large subunit contains a 16S rRNA (16S mt-rRNA), a copy of mitochondrial valine transfer RNA (mt-tRNA(Val)), which plays an integral structural role, and 52 different proteins. mL38 is located at the central protuberance.

The protein resides in the mitochondrion. This Homo sapiens (Human) protein is Large ribosomal subunit protein mL38 (MRPL38).